Here is a 275-residue protein sequence, read N- to C-terminus: NADPH-dependent 7-cyano-7-deazaguanine reductase (275 aa).

Isoleucine 81–serine 83 contributes to the substrate binding site. Residue serine 83 to lysine 84 participates in NADPH binding. Residue cysteine 181 is the Thioimide intermediate of the active site. Aspartate 188 acts as the Proton donor in catalysis. Histidine 220–glutamate 221 contacts substrate. Position 249 to 250 (arginine 249 to glycine 250) interacts with NADPH.

It belongs to the GTP cyclohydrolase I family. QueF type 2 subfamily. In terms of assembly, homodimer.

The protein resides in the cytoplasm. The catalysed reaction is 7-aminomethyl-7-carbaguanine + 2 NADP(+) = 7-cyano-7-deazaguanine + 2 NADPH + 3 H(+). It functions in the pathway tRNA modification; tRNA-queuosine biosynthesis. Functionally, catalyzes the NADPH-dependent reduction of 7-cyano-7-deazaguanine (preQ0) to 7-aminomethyl-7-deazaguanine (preQ1). This is NADPH-dependent 7-cyano-7-deazaguanine reductase from Xylella fastidiosa (strain 9a5c).